Here is a 242-residue protein sequence, read N- to C-terminus: Myogenic factor 6 (242 aa).

Positions 31-63 (SPLYPGSDGTLSPCQDQMPPEAGSDSSGEEHVL) are disordered. In terms of domain architecture, bHLH spans 93–144 (DRRKAATLRERRRLKKINEAFEALKRRTVANPNQRLPKVEILRSAINYIERL).

As to quaternary structure, efficient DNA binding requires dimerization with another bHLH protein.

It localises to the nucleus. Functionally, involved in muscle differentiation (myogenic factor). Induces fibroblasts to differentiate into myoblasts. Probable sequence specific DNA-binding protein. The protein is Myogenic factor 6 (MYF6) of Sus scrofa (Pig).